Here is a 249-residue protein sequence, read N- to C-terminus: MRILISNDDGVTAPGIAALHAALADHAECVVIAPDQDKSGAGSSLTLDRPLHPQTLANGFISLNGTPTDCVHLGLNGLLEHTPDMVVSGINLGANLGDDVLYSGTVAAALEGRFLGGTSLAFSLLSRLPDNLPTAAYIARRLVEAQSRLELPPRTVLNINIPNLPLEHIRGIQLTRLGHRARAAAPTKVVNPRGKEGYWIAVAGDAEDGGPGTDFHAVMQGYVSITPLQLDRTFNDAFERFDGWLEGVL.

4 residues coordinate a divalent metal cation: D8, D9, S39, and N91.

This sequence belongs to the SurE nucleotidase family. Requires a divalent metal cation as cofactor.

The protein localises to the cytoplasm. It catalyses the reaction a ribonucleoside 5'-phosphate + H2O = a ribonucleoside + phosphate. Its function is as follows. Nucleotidase that shows phosphatase activity on nucleoside 5'-monophosphates. This Pseudomonas entomophila (strain L48) protein is 5'-nucleotidase SurE.